The following is a 495-amino-acid chain: Leucine aminopeptidase 2 (495 aa).

Positions 1-21 (MKSQLLSLAVAVSTISQGVVG) are cleaved as a signal peptide. The region spanning 124-218 (PPANKIMAEL…EDGKNLASLV (95 aa)) is the PA domain. 2 N-linked (GlcNAc...) asparagine glycosylation sites follow: N142 and N235. 2 residues coordinate Zn(2+): H259 and D271. The N-linked (GlcNAc...) asparagine glycan is linked to N272. E303 serves as the catalytic Proton acceptor. The Zn(2+) site is built by E304 and D332. N-linked (GlcNAc...) asparagine glycosylation occurs at N352. H430 provides a ligand contact to Zn(2+).

Belongs to the peptidase M28 family. M28A subfamily. Monomer. It depends on Zn(2+) as a cofactor.

It is found in the secreted. Its function is as follows. Extracellular aminopeptidase that releases a wide variety of amino acids from natural peptides and contributes to pathogenicity. The protein is Leucine aminopeptidase 2 (LAP2) of Trichophyton equinum (Horse ringworm fungus).